We begin with the raw amino-acid sequence, 185 residues long: Ribosome-recycling factor (185 aa).

It belongs to the RRF family.

The protein localises to the cytoplasm. In terms of biological role, responsible for the release of ribosomes from messenger RNA at the termination of protein biosynthesis. May increase the efficiency of translation by recycling ribosomes from one round of translation to another. The protein is Ribosome-recycling factor of Frankia alni (strain DSM 45986 / CECT 9034 / ACN14a).